A 178-amino-acid polypeptide reads, in one-letter code: Cytochrome b6-f complex iron-sulfur subunit (178 aa).

A helical membrane pass occupies residues 20–42; the sequence is LLTFGSVTGVALGALYPVVNYFI. The region spanning 65–161 is the Rieske domain; the sequence is ASGWLADHKE…VNVENDNVFV (97 aa). Positions 107, 109, 125, and 128 each coordinate [2Fe-2S] cluster. Cysteines 112 and 127 form a disulfide.

It belongs to the Rieske iron-sulfur protein family. In terms of assembly, the 4 large subunits of the cytochrome b6-f complex are cytochrome b6, subunit IV (17 kDa polypeptide, PetD), cytochrome f and the Rieske protein, while the 4 small subunits are PetG, PetL, PetM and PetN. The complex functions as a dimer. The cofactor is [2Fe-2S] cluster.

It localises to the cellular thylakoid membrane. The catalysed reaction is 2 oxidized [plastocyanin] + a plastoquinol + 2 H(+)(in) = 2 reduced [plastocyanin] + a plastoquinone + 4 H(+)(out). Functionally, component of the cytochrome b6-f complex, which mediates electron transfer between photosystem II (PSII) and photosystem I (PSI), cyclic electron flow around PSI, and state transitions. The chain is Cytochrome b6-f complex iron-sulfur subunit from Synechococcus sp. (strain RCC307).